The chain runs to 233 residues: Large ribosomal subunit protein uL3 (233 aa).

Positions 145–172 (FGSQRASHGNSRSHRVPGSIGQAQDPGR) are disordered. Position 168 is an N5-methylglutamine (Q168).

Belongs to the universal ribosomal protein uL3 family. In terms of assembly, part of the 50S ribosomal subunit. Forms a cluster with proteins L14 and L19. In terms of processing, methylated by PrmB.

In terms of biological role, one of the primary rRNA binding proteins, it binds directly near the 3'-end of the 23S rRNA, where it nucleates assembly of the 50S subunit. This is Large ribosomal subunit protein uL3 from Bordetella petrii (strain ATCC BAA-461 / DSM 12804 / CCUG 43448).